We begin with the raw amino-acid sequence, 127 residues long: Large ribosomal subunit protein bL19 (127 aa).

Belongs to the bacterial ribosomal protein bL19 family.

Its function is as follows. This protein is located at the 30S-50S ribosomal subunit interface and may play a role in the structure and function of the aminoacyl-tRNA binding site. This chain is Large ribosomal subunit protein bL19, found in Acidovorax ebreus (strain TPSY) (Diaphorobacter sp. (strain TPSY)).